The following is a 475-amino-acid chain: Putative F-box protein At1g46840 (475 aa).

Residues 25–71 (TYVLEKLHIDLVIEILSRLSAKSIAICRCVSKQWNSLLVSQDFVESF) form the F-box domain. Low complexity predominate over residues 423–433 (SSYSTTRSYKS). The segment at 423 to 475 (SSYSTTRSYKSSGKRCSDRSIGEDEQDDIGEKRGDQAAERRERSTKRGKHEVH) is disordered. Positions 451–464 (IGEKRGDQAAERRE) are enriched in basic and acidic residues. The span at 465–475 (RSTKRGKHEVH) shows a compositional bias: basic residues.

This chain is Putative F-box protein At1g46840, found in Arabidopsis thaliana (Mouse-ear cress).